The chain runs to 437 residues: Zinc finger CCCH domain-containing protein 40 (437 aa).

The C3H1-type zinc finger occupies 6-33 (MYKTKLCILFNKTGDCSRPNCTFAHGNA). A disordered region spans residues 35–107 (LRRPGESSFT…MPFENRRDKD (73 aa)). Basic and acidic residues predominate over residues 48 to 85 (HNMDSDLRDRRHNMDSDLRDRLGRQFSPERRPSLDRSG). Positions 145-244 (NNVLEEQLKD…LGNQLSTYLA (100 aa)) form a coiled coil. Serine 259 carries the post-translational modification Phosphoserine. Disordered regions lie at residues 266–360 (RNLR…RRRF) and 380–437 (EFDD…DDSV). Residues 307-319 (RGEEEKVENEKKR) show a composition bias toward basic and acidic residues. 2 stretches are compositionally biased toward acidic residues: residues 333–343 (EEESGAWNDED) and 383–392 (DVAESEEENP). The segment covering 426–437 (MEQKKAYDDDSV) has biased composition (basic and acidic residues).

The protein is Zinc finger CCCH domain-containing protein 40 of Arabidopsis thaliana (Mouse-ear cress).